A 92-amino-acid chain; its full sequence is Small ribosomal subunit protein bS20 (92 aa).

The segment covering 1–11 (MANIKSQKKRI) has biased composition (basic residues). The disordered stretch occupies residues 1-22 (MANIKSQKKRIRQNEKARLRNK).

It belongs to the bacterial ribosomal protein bS20 family.

In terms of biological role, binds directly to 16S ribosomal RNA. The protein is Small ribosomal subunit protein bS20 of Thermobifida fusca (strain YX).